Here is a 202-residue protein sequence, read N- to C-terminus: MSVVDMSLWEPRTELGRMVKEGKIRTIDEVFANNYIIKEPEIVDILVPGLKQELLNVNIVQRQTHAGERSLFQAVVAVGNEDGYVGVGIGKARQVRQAIEKAVREAKLNLIPVRRGCGSWKCSCDEPHSVPFVVKGKSGSVEVTLIPAPKGVGLVAGDVAKAVLRLAGVKDVWTHTRGDTRTTLNFALAVYNALRNTYYFKI.

Residues 50–113 (LKQELLNVNI…REAKLNLIPV (64 aa)) form the S5 DRBM domain.

It belongs to the universal ribosomal protein uS5 family. In terms of assembly, part of the 30S ribosomal subunit. Contacts protein S4.

Its function is as follows. With S4 and S12 plays an important role in translational accuracy. This is Small ribosomal subunit protein uS5 from Pyrobaculum arsenaticum (strain DSM 13514 / JCM 11321 / PZ6).